A 116-amino-acid polypeptide reads, in one-letter code: Large ribosomal subunit protein bL17 (116 aa).

Belongs to the bacterial ribosomal protein bL17 family. Part of the 50S ribosomal subunit. Contacts protein L32.

This Chloroflexus aurantiacus (strain ATCC 29366 / DSM 635 / J-10-fl) protein is Large ribosomal subunit protein bL17.